We begin with the raw amino-acid sequence, 116 residues long: Large ribosomal subunit protein uL18 (116 aa).

This sequence belongs to the universal ribosomal protein uL18 family. Part of the 50S ribosomal subunit; part of the 5S rRNA/L5/L18/L25 subcomplex. Contacts the 5S and 23S rRNAs.

In terms of biological role, this is one of the proteins that bind and probably mediate the attachment of the 5S RNA into the large ribosomal subunit, where it forms part of the central protuberance. The polypeptide is Large ribosomal subunit protein uL18 (Chromohalobacter salexigens (strain ATCC BAA-138 / DSM 3043 / CIP 106854 / NCIMB 13768 / 1H11)).